Consider the following 1401-residue polypeptide: METTSLQRKFPEWMSMQSQRCATEEKACVQKSVLEDNLPFLEFPGSIVYSYEASDCSFLSEDISMRLSDGDVVGFDMEWPPIYKPGKRSRVAVIQLCVSESKCYLFHISSMSVFPQGLKMLLENKSIKKAGVGIEGDQWKLLRDFDVKLESFVELTDVANEKLKCAETWSLNGLVKHVLGKQLLKDKSIRCSNWSNFPLTEDQKLYAATDAYAGLIIYQKLGNLGDTAQVFALNKAEENLPLEMKKQLNSISEEMRDLANRFPVTCRNLETLQRVPVILKSISENLCSLRKVICGPTNTETRLKPGSSFNLLSSEDSAAAGEKEKQIGKHSTFAKIKEEPWDPELDSLVKQEEVDVFRNQVKQEKGESENEIEDNLLREDMERTCVIPSISENELQDLEQQAKEEKYNDVSHQLSEHLSPNDDENDSSYIIESDEDLEMEMLKSLENLNSDVVEPTHSTWLEMGTNGRLPPEEEDGHGNEAIKEEQEEEDHLLPEPNAKQINCLKTYFGHSSFKPVQWKVIHSVLEERRDNVVVMATGYGKSLCFQYPPVYTGKIGIVISPLISLMEDQVLQLELSNVPACLLGSAQSKNILGDVKLGKYRVIYITPEFCSGNLDLLQQLDSSIGITLIAVDEAHCISEWGHDFRSSFRMLGSLKTALPLVPVIALSATASSSIREDIISCLNLKDPQITCTGFDRPNLYLEVGRKTGNILQDLKPFLVRKASSAWEFEGPTIIYCPSRKMTEQVTAELGKLNLACRTYHAGMKISERKDVHHRFLRDEIQCVVATVAFGMGINKADIRKVIHYGAPKEMESYYQEIGRAGRDGLQSSCHLLWAPADFNTSRNLLIEIHDEKFRLYKLKMMVKMEKYLHSSQCRRRIILSHFEDKCLQKASLDIMGTEKCCDNCRPRLNHCLTANNSEDASQDFGPQAFQLLSAVDILQEKFGIGIPILFLRGSNSQRLPDKYRGHRLFGAGKEQAESWWKTLSHHLIAEGFLVEVPKENKYIKTCSLTKKGRKWLGEASSQSPPSLLLQANEEMFPRKVLLPSSNPVSPETTQHSSNQNPAGLTTKQSNLERTHSYKVPEKVSSGTNIPKKSAVMPSPGTSSSPLEPAISAQELDARTGLYARLVEARQKHANKMDVPPAILATNKVLLDMAKMRPTTVENMKQIDGVSEGKAALLAPLLEVIKHFCQVTSVQTDLLSSAKPHKEQEKSQEMEKKDCSLPQSVAVTYTLFQEKKMPLHSIAENRLLPLTAAGMHLAQAVKAGYPLDMERAGLTPETWKIIMDVIRNPPINSDMYKVKLIRMLVPENLDTYLIHMAIEILQSGSDSRTQPPCDSSRKRRFPSSAESCESCKESKEAVTETKASSSESKRKLPEWFAKGNVPSADTGSSSSMAKTKKKGLFS.

An interaction with WRNIP1 region spans residues 1–271; sequence METTSLQRKF…FPVTCRNLET (271 aa). The KBM 1 signature appears at 6-18; that stretch reads LQRKFPEWMSMQS. The region spanning 51-223 is the 3'-5' exonuclease domain; it reads YEASDCSFLS…GLIIYQKLGN (173 aa). Asp76 and Glu78 together coordinate Zn(2+). Residue Lys148 forms a Glycyl lysine isopeptide (Lys-Gly) (interchain with G-Cter in SUMO2) linkage. Asp210 lines the Zn(2+) pocket. Residues Lys235 and Lys246 each participate in a glycyl lysine isopeptide (Lys-Gly) (interchain with G-Cter in SUMO2) cross-link. The disordered stretch occupies residues 401-427; sequence QAKEEKYNDVSHQLSEHLSPNDDENDS. Phosphoserine is present on residues Ser419, Ser433, and Ser444. Residues 464 to 492 form a disordered region; sequence GTNGRLPPEEEDGHGNEAIKEEQEEEDHL. Residues 522 to 688 form the Helicase ATP-binding domain; the sequence is HSVLEERRDN…ISCLNLKDPQ (167 aa). ATP is bound at residue 535–542; that stretch reads MATGYGKS. The DEAH box signature appears at 632-635; that stretch reads DEAH. Residues 713-866 enclose the Helicase C-terminal domain; it reads DLKPFLVRKA…KLKMMVKMEK (154 aa). Zn(2+) is bound by residues Cys873, Cys900, Cys901, and Cys904. The interval 952-958 is interaction with DNA; that stretch reads RGSNSQR. Residues 1041–1106 form a disordered region; that stretch reads LLPSSNPVSP…PSPGTSSSPL (66 aa). Positions 1043–1069 are enriched in polar residues; sequence PSSNPVSPETTQHSSNQNPAGLTTKQS. Residues 1070–1081 are compositionally biased toward basic and acidic residues; that stretch reads NLERTHSYKVPE. Ser1098 bears the Phosphoserine mark. One can recognise an HRDC domain in the interval 1115 to 1194; the sequence is LDARTGLYAR…KHFCQVTSVQ (80 aa). The segment covering 1323-1332 has biased composition (polar residues); it reads GSDSRTQPPC. The segment at 1323 to 1401 is disordered; it reads GSDSRTQPPC…AKTKKKGLFS (79 aa). Positions 1348 to 1358 are enriched in basic and acidic residues; the sequence is ESCKESKEAVT. At Ser1364 the chain carries Phosphoserine. A KBM 2 motif is present at residues 1367 to 1376; the sequence is SKRKLPEWFA. Positions 1382 to 1392 are enriched in polar residues; sequence SADTGSSSSMA. The XLM motif lies at 1388–1401; it reads SSSMAKTKKKGLFS.

The protein belongs to the helicase family. RecQ subfamily. As to quaternary structure, monomer, and homooligomer. May exist as homodimer, homotrimer, homotetramer and/or homohexamer. Homotetramer, or homohexamer, when bound to DNA. Interacts via its N-terminal domain with WRNIP1. Interacts with EXO1, PCNA and SUPV3L1. Interacts with PML (isoform PML-4). Interacts (via KBM motif) with XRCC5 and XRCC6; promoting recruitment to DNA damage sites. Interacts with RECQL5; this interaction stimulates WRN helicase activity on DNA fork duplexes. The cofactor is Zn(2+). Mn(2+) serves as cofactor. Post-translationally, phosphorylated by PRKDC. Expressed ubiquitously in most organs at a low level, highly expressed in testis, ovary and spleen.

The protein localises to the nucleus. The protein resides in the nucleolus. It localises to the nucleoplasm. Its subcellular location is the chromosome. It catalyses the reaction Couples ATP hydrolysis with the unwinding of duplex DNA by translocating in the 3'-5' direction.. The enzyme catalyses ATP + H2O = ADP + phosphate + H(+). With respect to regulation, zinc ions stimulate the exonuclease activity. In terms of biological role, multifunctional enzyme that has magnesium and ATP-dependent 3'-5' DNA-helicase activity. Has 3'-&gt;5' exonuclease activity on forked dsDNA. Has no nuclease activity towards single-stranded DNA or blunt-ended double-stranded DNA. Binds preferentially to DNA substrates containing alternate secondary structures, such as replication forks and Holliday junctions. May play an important role in the dissociation of joint DNA molecules that can arise as products of homologous recombination, at stalled replication forks or during DNA repair. Alleviates stalling of DNA polymerases at the site of DNA lesions. Unwinds some G-quadruplex DNA. Plays a role in the formation of DNA replication focal centers; stably associates with foci elements generating binding sites for RP-A. Plays a role in double-strand break repair after gamma-irradiation. This chain is Bifunctional 3'-5' exonuclease/ATP-dependent helicase WRN (Wrn), found in Mus musculus (Mouse).